The chain runs to 630 residues: 1-deoxy-D-xylulose-5-phosphate synthase (630 aa).

Residues His-73 and 114–116 each bind thiamine diphosphate; that span reads SHA. Asp-146 is a Mg(2+) binding site. Residues 147 to 148, Asn-176, Phe-287, and Glu-371 each bind thiamine diphosphate; that span reads GA. Asn-176 is a Mg(2+) binding site.

It belongs to the transketolase family. DXPS subfamily. As to quaternary structure, homodimer. It depends on Mg(2+) as a cofactor. Thiamine diphosphate is required as a cofactor.

It carries out the reaction D-glyceraldehyde 3-phosphate + pyruvate + H(+) = 1-deoxy-D-xylulose 5-phosphate + CO2. It participates in metabolic intermediate biosynthesis; 1-deoxy-D-xylulose 5-phosphate biosynthesis; 1-deoxy-D-xylulose 5-phosphate from D-glyceraldehyde 3-phosphate and pyruvate: step 1/1. Catalyzes the acyloin condensation reaction between C atoms 2 and 3 of pyruvate and glyceraldehyde 3-phosphate to yield 1-deoxy-D-xylulose-5-phosphate (DXP). The sequence is that of 1-deoxy-D-xylulose-5-phosphate synthase from Corynebacterium jeikeium (strain K411).